Consider the following 301-residue polypeptide: 4-hydroxy-tetrahydrodipicolinate synthase (301 aa).

A pyruvate-binding site is contributed by threonine 46. Tyrosine 134 functions as the Proton donor/acceptor in the catalytic mechanism. Residue lysine 162 is the Schiff-base intermediate with substrate of the active site. Isoleucine 203 serves as a coordination point for pyruvate.

The protein belongs to the DapA family. As to quaternary structure, homotetramer; dimer of dimers.

The protein localises to the cytoplasm. It carries out the reaction L-aspartate 4-semialdehyde + pyruvate = (2S,4S)-4-hydroxy-2,3,4,5-tetrahydrodipicolinate + H2O + H(+). Its pathway is amino-acid biosynthesis; L-lysine biosynthesis via DAP pathway; (S)-tetrahydrodipicolinate from L-aspartate: step 3/4. In terms of biological role, catalyzes the condensation of (S)-aspartate-beta-semialdehyde [(S)-ASA] and pyruvate to 4-hydroxy-tetrahydrodipicolinate (HTPA). The protein is 4-hydroxy-tetrahydrodipicolinate synthase of Anaplasma marginale (strain Florida).